The primary structure comprises 141 residues: Putative pre-16S rRNA nuclease (141 aa).

Belongs to the YqgF nuclease family.

The protein localises to the cytoplasm. Could be a nuclease involved in processing of the 5'-end of pre-16S rRNA. The polypeptide is Putative pre-16S rRNA nuclease (Syntrophomonas wolfei subsp. wolfei (strain DSM 2245B / Goettingen)).